The primary structure comprises 165 residues: MTVTLNRGSITSLMSSSQAVSTLQPVASELKTQLENKLKSESAEKTREVLWQQYYASNPPDHAVLEVLAMPVREALLARFGQHQGSVVPAIDLPELRSVLQQFDSFGKRWEAILLQVLEGIKPNESQVGLPYLSELINKELMILLPSNSIVDSLLHNSHQIDMDT.

Belongs to the YopR family.

It localises to the secreted. In terms of biological role, may be involved in the regulation of the assembly of the type III secretion system (T3SS), also called injectisome, which is used to inject bacterial effector proteins into eukaryotic host cells. May control the secretion and/or polymerization of YscF/SctF, the principal component of the needle filament, thereby impacting the assembly of the T3SS. Involved in pathogenesis. In Yersinia pseudotuberculosis serotype I (strain IP32953), this protein is Type 3 secretion system regulator YopR.